The sequence spans 305 residues: Glycine--tRNA ligase alpha subunit (305 aa).

Belongs to the class-II aminoacyl-tRNA synthetase family. In terms of assembly, tetramer of two alpha and two beta subunits.

The protein localises to the cytoplasm. The catalysed reaction is tRNA(Gly) + glycine + ATP = glycyl-tRNA(Gly) + AMP + diphosphate. This is Glycine--tRNA ligase alpha subunit (glyQ) from Vibrio cholerae serotype O1 (strain ATCC 39315 / El Tor Inaba N16961).